An 898-amino-acid chain; its full sequence is Coiled-coil domain-containing protein 186 (898 aa).

Disordered regions lie at residues 1 to 43 (MSET…NESK), 68 to 95 (NYIP…QIAN), and 702 to 749 (RRKL…SSVA). S2 is modified (N-acetylserine). Polar residues predominate over residues 82 to 95 (KTDTGSENSEQIAN). The stretch at 201 to 712 (KYLQQEHIIK…RKLDQVESGS (512 aa)) forms a coiled coil. The span at 703–717 (RKLDQVESGSYDKEV) shows a compositional bias: basic and acidic residues. Residues 718–734 (SSMGSRSSSSGSLNARS) are compositionally biased toward low complexity. The residue at position 740 (S740) is a Phosphoserine. 2 coiled-coil regions span residues 759 to 803 (AMLI…IQSY) and 855 to 894 (KLQA…LEQR).

The protein is Coiled-coil domain-containing protein 186 (CCDC186) of Homo sapiens (Human).